The sequence spans 620 residues: Estrogen receptor (620 aa).

Composition is skewed to polar residues over residues 1-10 (MSKRQSSVQI) and 101-111 (GSLQSLGSGPT). Disordered stretches follow at residues 1–55 (MSKR…RGSG) and 88–111 (YSAP…SGPT). Residues 1–185 (MSKRQSSVQI…GFEMAKDTRF (185 aa)) are modulating. 2 NR C4-type zinc fingers span residues 186–206 (CAVC…CEGC) and 222–246 (CPAT…LRKC). Positions 186–251 (CAVCSDYASG…RLRKCYEVGM (66 aa)) form a DNA-binding region, nuclear receptor. Residues 252–314 (MKGGVRKDRI…GGGRLSVTSI (63 aa)) are hinge. A disordered region spans residues 286 to 308 (KTVHYDGRKRSSTGGGGGGGGGR). Residues 298–308 (TGGGGGGGGGR) show a composition bias toward gly residues. One can recognise an NR LBD domain in the interval 315–551 (PPEQVLLLLQ…DLLLEMLDAH (237 aa)). The segment at 558–620 (RAPQSLSQVD…RPDCTPALQD (63 aa)) is disordered.

This sequence belongs to the nuclear hormone receptor family. NR3 subfamily. As to quaternary structure, binds DNA as a homodimer. Can form a heterodimer with ER-beta. As to expression, widely expressed in brain, ovary, testis, and female liver.

It is found in the nucleus. The steroid hormones and their receptors are involved in the regulation of eukaryotic gene expression and affect cellular proliferation and differentiation in target tissues. In Oryzias latipes (Japanese rice fish), this protein is Estrogen receptor (esr1).